The sequence spans 294 residues: Cell division control protein 2 homolog 2 (294 aa).

The Protein kinase domain occupies 4–287; that stretch reads YEKVEKIGEG…ARGALEHEYF (284 aa). ATP-binding positions include 10 to 18 and Lys-33; that span reads IGEGTYGVV. A Phosphothreonine modification is found at Thr-14. A Phosphotyrosine modification is found at Tyr-15. Asp-127 acts as the Proton acceptor in catalysis. Thr-161 is subject to Phosphothreonine; by CAK.

The protein belongs to the protein kinase superfamily. CMGC Ser/Thr protein kinase family. CDC2/CDKX subfamily. Found in most organs including root, young leaf, stem, vegetative meristem and flower bud.

The enzyme catalyses L-seryl-[protein] + ATP = O-phospho-L-seryl-[protein] + ADP + H(+). It catalyses the reaction L-threonyl-[protein] + ATP = O-phospho-L-threonyl-[protein] + ADP + H(+). With respect to regulation, phosphorylation at Thr-14 or Tyr-15 inactivates the enzyme, while phosphorylation at Thr-161 activates it. Functionally, plays a key role in the control of the eukaryotic cell cycle. Component of the kinase complex that phosphorylates the repetitive C-terminus of RNA polymerase II. This chain is Cell division control protein 2 homolog 2 (CDC2B), found in Medicago sativa (Alfalfa).